The following is a 1050-amino-acid chain: FHIP family protein GE18198 (1050 aa).

Phosphoserine is present on residues Ser-498 and Ser-805. Disordered regions lie at residues 800-827 (KGNEGSPMHHSQQQQMATNSGQQQGQLR), 865-888 (TSMFSRKSASNTSTTPPNGSSASS), 911-954 (TDGR…SGSN), and 968-995 (SNTTTHSASTLHGLDGGPSTGGFNSEPA). The span at 808 to 826 (HHSQQQQMATNSGQQQGQL) shows a compositional bias: polar residues. Low complexity predominate over residues 872–888 (SASNTSTTPPNGSSASS). Residues 918–935 (HAQTSAGTCETSLSTQPQ) show a composition bias toward polar residues. The segment covering 941 to 954 (TGAIATSATASGSN) has biased composition (low complexity). Residues 968–977 (SNTTTHSAST) are compositionally biased toward polar residues.

Belongs to the FHIP family.

This Drosophila yakuba (Fruit fly) protein is FHIP family protein GE18198.